The chain runs to 294 residues: 3-methyl-2-oxobutanoate hydroxymethyltransferase 1 (294 aa).

Asp55 contributes to the Mg(2+) binding site. 3-methyl-2-oxobutanoate-binding positions include 55–56 and Lys123; that span reads DS. Glu192 (proton acceptor) is an active-site residue.

It belongs to the PanB family. Homodecamer; pentamer of dimers. It depends on Mg(2+) as a cofactor.

The protein localises to the cytoplasm. The catalysed reaction is 3-methyl-2-oxobutanoate + (6R)-5,10-methylene-5,6,7,8-tetrahydrofolate + H2O = 2-dehydropantoate + (6S)-5,6,7,8-tetrahydrofolate. Its pathway is cofactor biosynthesis; (R)-pantothenate biosynthesis; (R)-pantoate from 3-methyl-2-oxobutanoate: step 1/2. Its function is as follows. Catalyzes the reversible reaction in which hydroxymethyl group from 5,10-methylenetetrahydrofolate is transferred onto alpha-ketoisovalerate to form ketopantoate. This is 3-methyl-2-oxobutanoate hydroxymethyltransferase 1 from Methylibium petroleiphilum (strain ATCC BAA-1232 / LMG 22953 / PM1).